Reading from the N-terminus, the 373-residue chain is Spore germination protein KB (373 aa).

Transmembrane regions (helical) follow at residues 11–31 (LFVM…PGSM), 37–57 (WIAV…YQGI), 78–98 (LSWL…ARVL), 105–125 (LLTF…LMVV), 143–163 (LLFG…IVSG), 185–205 (VFTQ…MIFP), 219–239 (IAMA…ISVL), 269–289 (VFFM…YLYA), 306–326 (LAYP…TNFS), and 338–358 (LYIH…VAVW).

Belongs to the amino acid-polyamine-organocation (APC) superfamily. Spore germination protein (SGP) (TC 2.A.3.9) family.

The protein localises to the cell membrane. In terms of biological role, involved in the germination response to the combination of glucose, fructose, L-asparagine, and KCl. The protein is Spore germination protein KB (gerKB) of Bacillus subtilis (strain 168).